Reading from the N-terminus, the 420-residue chain is MSNGVNAPLARHAMAYVLAGGRGSRLMELTDRRAKPAVYFGGKSRIIDFALSNALNSGIRRIAVATQYKAHSLIRHLQHGWNFFRPERNESFDILPASQRVSEELWYLGTADAVYQNIDIIESYDPQFIVLLAGDHIYKMDYEQMLQQHVEQGADVTVGCLEVPRREASGFGVMAVDADDVIHSFVEKPANPPPMPGKPTMSLASMGIYVFDTKFLFEELRRDAADPNSSHDFGKDIIPYIVKHGKAVAHSFDRSCIRSHAEAASYWRDVGTVDAYWAANIDLCDIVPELDLYDHNWPIWTYGEIVPPAKFVHDKIGRRGEAISSLVSGGCIISGSTLRQTLLFTGVRVHSYSTIEQAVILPYVDVARSCQLTNVVIDRGVRIPEGLVVGEDPELDAARFHRTDAGICLITQPMIDRLEA.

Alpha-D-glucose 1-phosphate-binding positions include Y107, G172, 187–188, and S205; that span reads EK.

It belongs to the bacterial/plant glucose-1-phosphate adenylyltransferase family. As to quaternary structure, homotetramer.

It catalyses the reaction alpha-D-glucose 1-phosphate + ATP + H(+) = ADP-alpha-D-glucose + diphosphate. It participates in glycan biosynthesis; glycogen biosynthesis. Involved in the biosynthesis of ADP-glucose, a building block required for the elongation reactions to produce glycogen. Catalyzes the reaction between ATP and alpha-D-glucose 1-phosphate (G1P) to produce pyrophosphate and ADP-Glc. The chain is Glucose-1-phosphate adenylyltransferase from Rhodopseudomonas palustris (strain BisB18).